Consider the following 149-residue polypeptide: Envelope glycoprotein UL4 (149 aa).

An N-terminal signal peptide occupies residues 1–18; that stretch reads MMLRTWISLPMVLLDAYC. 9 N-linked (GlcNAc...) asparagine; by host glycosylation sites follow: N46, N51, N59, N67, N105, N109, N119, N136, and N145.

The protein belongs to the RL11 family. Post-translationally, N-glycosylated and possibly O-glycosylated.

It localises to the virion membrane. This is Envelope glycoprotein UL4 (UL4) from Human cytomegalovirus (strain Merlin) (HHV-5).